The following is a 243-amino-acid chain: Triosephosphate isomerase (243 aa).

9–11 (NWK) contributes to the substrate binding site. Catalysis depends on H98, which acts as the Electrophile. The active-site Proton acceptor is the E167. Substrate-binding positions include G173, S205, and 226–227 (GG).

The protein belongs to the triosephosphate isomerase family. Homodimer.

It localises to the cytoplasm. The catalysed reaction is D-glyceraldehyde 3-phosphate = dihydroxyacetone phosphate. Its pathway is carbohydrate biosynthesis; gluconeogenesis. The protein operates within carbohydrate degradation; glycolysis; D-glyceraldehyde 3-phosphate from glycerone phosphate: step 1/1. Functionally, involved in the gluconeogenesis. Catalyzes stereospecifically the conversion of dihydroxyacetone phosphate (DHAP) to D-glyceraldehyde-3-phosphate (G3P). This Mesomycoplasma hyorhinis (Mycoplasma hyorhinis) protein is Triosephosphate isomerase.